The sequence spans 565 residues: Bicyclogermacrene synthase (565 aa).

Residues Asp317, Asp321, Asp461, and Glu469 each contribute to the Mg(2+) site. The short motif at 317–321 (DDTFD) is the DDXXD motif element.

This sequence belongs to the terpene synthase family. It depends on Mg(2+) as a cofactor.

It catalyses the reaction (2E,6E)-farnesyl diphosphate = bicyclogermacrene + diphosphate. Its pathway is secondary metabolite biosynthesis; terpenoid biosynthesis. In terms of biological role, sesquiterpene synthase converting farnesyl diphosphate to bicyclogermacrene as the major product. The polypeptide is Bicyclogermacrene synthase (Phyla dulcis (Aztec sweet herb)).